The chain runs to 297 residues: Alpha-tubulin N-acetyltransferase 1 (297 aa).

An N-acetyltransferase domain is found at M1 to F184. Acetyl-CoA-binding positions include F118–S131 and S154–K163. A disordered region spans residues F226–H297. The segment covering G230 to P240 has biased composition (pro residues). The segment covering S241 to A264 has biased composition (low complexity). Polar residues-rich tracts occupy residues V266–N278 and T286–H297.

It belongs to the acetyltransferase ATAT1 family. Monomer.

The protein localises to the cytoplasm. Its subcellular location is the membrane. It is found in the clathrin-coated pit. It localises to the cell junction. The protein resides in the focal adhesion. The protein localises to the cell projection. Its subcellular location is the axon. It is found in the cytoskeleton. It localises to the spindle. It catalyses the reaction L-lysyl-[alpha-tubulin] + acetyl-CoA = N(6)-acetyl-L-lysyl-[alpha-tubulin] + CoA + H(+). Functionally, specifically acetylates 'Lys-40' in alpha-tubulin on the lumenal side of microtubules. Promotes microtubule destabilization and accelerates microtubule dynamics; this activity may be independent of acetylation activity. Acetylates alpha-tubulin with a slow enzymatic rate, due to a catalytic site that is not optimized for acetyl transfer. Enters the microtubule through each end and diffuses quickly throughout the lumen of microtubules. Acetylates only long/old microtubules because of its slow acetylation rate since it does not have time to act on dynamically unstable microtubules before the enzyme is released. May be involved in neuron development. Acetylates alpha-tubulin in neurons, but not in cilia. This chain is Alpha-tubulin N-acetyltransferase 1, found in Danio rerio (Zebrafish).